The following is a 138-amino-acid chain: Translation initiation factor 2 subunit beta (138 aa).

The protein belongs to the eIF-2-beta/eIF-5 family. In terms of assembly, heterotrimer composed of an alpha, a beta and a gamma chain.

Its function is as follows. eIF-2 functions in the early steps of protein synthesis by forming a ternary complex with GTP and initiator tRNA. The sequence is that of Translation initiation factor 2 subunit beta from Methanopyrus kandleri (strain AV19 / DSM 6324 / JCM 9639 / NBRC 100938).